Reading from the N-terminus, the 302-residue chain is Proteasome subunit beta (302 aa).

Positions Met1–His10 are enriched in basic and acidic residues. Positions Met1 to Ala21 are disordered. Positions Met1–Ala67 are cleaved as a propeptide — removed in mature form; by autocatalysis. The Nucleophile role is filled by Thr68. The segment at Arg283 to Asn302 is disordered.

Belongs to the peptidase T1B family. As to quaternary structure, the 20S proteasome core is composed of 14 alpha and 14 beta subunits that assemble into four stacked heptameric rings, resulting in a barrel-shaped structure. The two inner rings, each composed of seven catalytic beta subunits, are sandwiched by two outer rings, each composed of seven alpha subunits. The catalytic chamber with the active sites is on the inside of the barrel. Has a gated structure, the ends of the cylinder being occluded by the N-termini of the alpha-subunits. Is capped by the proteasome-associated ATPase, ARC.

Its subcellular location is the cytoplasm. The catalysed reaction is Cleavage of peptide bonds with very broad specificity.. It participates in protein degradation; proteasomal Pup-dependent pathway. The formation of the proteasomal ATPase ARC-20S proteasome complex, likely via the docking of the C-termini of ARC into the intersubunit pockets in the alpha-rings, may trigger opening of the gate for substrate entry. Interconversion between the open-gate and close-gate conformations leads to a dynamic regulation of the 20S proteasome proteolysis activity. In terms of biological role, component of the proteasome core, a large protease complex with broad specificity involved in protein degradation. The polypeptide is Proteasome subunit beta (Kineococcus radiotolerans (strain ATCC BAA-149 / DSM 14245 / SRS30216)).